We begin with the raw amino-acid sequence, 297 residues long: Aspartate carbamoyltransferase catalytic subunit (297 aa).

R52 and T53 together coordinate carbamoyl phosphate. Position 80 (K80) interacts with L-aspartate. Residues R102, H130, and Q133 each coordinate carbamoyl phosphate. Residues R167 and R217 each coordinate L-aspartate. 2 residues coordinate carbamoyl phosphate: G256 and P257.

It belongs to the aspartate/ornithine carbamoyltransferase superfamily. ATCase family. As to quaternary structure, heterododecamer (2C3:3R2) of six catalytic PyrB chains organized as two trimers (C3), and six regulatory PyrI chains organized as three dimers (R2).

The catalysed reaction is carbamoyl phosphate + L-aspartate = N-carbamoyl-L-aspartate + phosphate + H(+). Its pathway is pyrimidine metabolism; UMP biosynthesis via de novo pathway; (S)-dihydroorotate from bicarbonate: step 2/3. Its function is as follows. Catalyzes the condensation of carbamoyl phosphate and aspartate to form carbamoyl aspartate and inorganic phosphate, the committed step in the de novo pyrimidine nucleotide biosynthesis pathway. The polypeptide is Aspartate carbamoyltransferase catalytic subunit (Helicobacter hepaticus (strain ATCC 51449 / 3B1)).